A 244-amino-acid chain; its full sequence is Phosphoadenosine 5'-phosphosulfate reductase (244 aa).

Catalysis depends on Cys-239, which acts as the Nucleophile; cysteine thiosulfonate intermediate.

This sequence belongs to the PAPS reductase family. CysH subfamily.

It localises to the cytoplasm. It catalyses the reaction [thioredoxin]-disulfide + sulfite + adenosine 3',5'-bisphosphate + 2 H(+) = [thioredoxin]-dithiol + 3'-phosphoadenylyl sulfate. The protein operates within sulfur metabolism; hydrogen sulfide biosynthesis; sulfite from sulfate: step 3/3. Its function is as follows. Catalyzes the formation of sulfite from phosphoadenosine 5'-phosphosulfate (PAPS) using thioredoxin as an electron donor. In Salmonella dublin (strain CT_02021853), this protein is Phosphoadenosine 5'-phosphosulfate reductase.